The primary structure comprises 773 residues: Polyribonucleotide nucleotidyltransferase (773 aa).

Mg(2+) is bound by residues Asp-490 and Asp-496. A KH domain is found at Pro-557–Ile-616. Residues Gly-626–Arg-694 enclose the S1 motif domain. The span at Pro-700–Lys-721 shows a compositional bias: basic and acidic residues. Residues Pro-700–Glu-773 are disordered. Over residues Arg-739 to Asn-748 the composition is skewed to low complexity. Residues Phe-751–Glu-773 are compositionally biased toward basic and acidic residues.

Belongs to the polyribonucleotide nucleotidyltransferase family. It depends on Mg(2+) as a cofactor.

It is found in the cytoplasm. The enzyme catalyses RNA(n+1) + phosphate = RNA(n) + a ribonucleoside 5'-diphosphate. Involved in mRNA degradation. Catalyzes the phosphorolysis of single-stranded polyribonucleotides processively in the 3'- to 5'-direction. The polypeptide is Polyribonucleotide nucleotidyltransferase (Lactococcus lactis subsp. lactis (strain IL1403) (Streptococcus lactis)).